The chain runs to 976 residues: Probable outer membrane protein PmpA (976 aa).

Residues 1-50 form the signal peptide; that stretch reads MNQVIKTIALCYQKYISRASNKTFSIHNTLSLSLLPKCLLGSLIIYTSHA. Residues 671–976 enclose the Autotransporter domain; it reads GNAIPNSLWS…SLSCGGYVGF (306 aa).

Belongs to the PMP outer membrane protein family.

The protein localises to the secreted. It is found in the cell wall. Its subcellular location is the cell outer membrane. The protein is Probable outer membrane protein PmpA (pmpA) of Chlamydia muridarum (strain MoPn / Nigg).